Here is an 827-residue protein sequence, read N- to C-terminus: MNLSRRDFMKANAAMAAATAAGLTIPVKNVVAAESEIKWDKGVCRFCGTGCAVLVGTKDGRVVASQGDPDAEVNRGLNCIKGYFLPKIMYGKDRLTQPLLRMTNGKFDKNGDFAPVSWDFAFKTMAEKFKEAFKKNGQNAVGMFSSGQSTIWEGYAKNKLWKAGFRSNNVDPNARHCMASAAVAFMRTFGMDEPMGCYDDIEQADAFVLWGSNMAEMHPILWSRITDRRISNPDVRVTVLSTYEHRSFELADHGLIFTPQTDLAIMNYIINYLIQNNAINWDFVNKHTKFKRGETNIGYGLRPEHPLEKDTNRKTAGKMHDSSFEELKQLVSEYTVEKVSQMSGLDKVQLETLAKLYADPTKKVVSYWTMGFNQHTRGVWVNQLIYNIHLLTGKISIPGCGPFSLTGQPSACGTAREVGSFPHRLPADLVVTNPKHREIAERIWKLPKGTVSEKVGLHTIAQDRAMNDGKMNVLWQMCNNNMQAGPNINQERLPGWRKEGNFVIVSDPYPTVSALSADLILPTAMWVEKEGAYGNAERRTQFWRQQVKAPGEAKSDLWQLMEFAKYFTTDEMWTEELLAQMPEYRGKTLYEVLFKNGQVDKFPLSELAEGQLNDESEYFGYYVHKGLFEEYAEFGRGHGHDLAPFDMYHKARGLRWPVVEGKETLWRYREGYDPYVKEGEGVAFYGYPDKKAIILAVPYEPPAESPDNEYDLWLSTGRVLEHWHTGTMTRRVPELHRAFPNNLVWMHPLDAQARGLRHGDKIKISSRRGEMISYLDTRGRNKPPRGLVFTTFFDAGQLANNLTLDATDPISKETDFKKCAVKVEKAA.

Residues 1 to 33 (MNLSRRDFMKANAAMAAATAAGLTIPVKNVVAA) constitute a signal peptide (tat-type signal). In terms of domain architecture, 4Fe-4S Mo/W bis-MGD-type spans 37 to 93 (IKWDKGVCRFCGTGCAVLVGTKDGRVVASQGDPDAEVNRGLNCIKGYFLPKIMYGKD). The [4Fe-4S] cluster site is built by Cys44, Cys47, Cys51, and Cys79. Mo-bis(molybdopterin guanine dinucleotide) contacts are provided by residues Lys81, Gln148, Asn173, Cys177, 210 to 217 (WGSNMAEM), 241 to 245 (STYEH), 260 to 262 (QTD), Met370, Gln374, Asn480, 506 to 507 (SD), Lys529, Asp556, and 716 to 725 (TGRVLEHWHT). Substrate is bound at residue Phe792. Mo-bis(molybdopterin guanine dinucleotide) is bound by residues Asn800 and Lys817.

It belongs to the prokaryotic molybdopterin-containing oxidoreductase family. NasA/NapA/NarB subfamily. In terms of assembly, component of the periplasmic nitrate reductase NapAB complex composed of NapA and NapB. The cofactor is [4Fe-4S] cluster. Mo-bis(molybdopterin guanine dinucleotide) is required as a cofactor. In terms of processing, predicted to be exported by the Tat system. The position of the signal peptide cleavage has not been experimentally proven.

It localises to the periplasm. It carries out the reaction 2 Fe(II)-[cytochrome] + nitrate + 2 H(+) = 2 Fe(III)-[cytochrome] + nitrite + H2O. Functionally, catalytic subunit of the periplasmic nitrate reductase complex NapAB. Receives electrons from NapB and catalyzes the reduction of nitrate to nitrite. The chain is Periplasmic nitrate reductase from Haemophilus influenzae (strain PittEE).